The primary structure comprises 387 residues: tRNA N6-adenosine threonylcarbamoyltransferase (387 aa).

Residues histidine 112 and histidine 116 each contribute to the Fe cation site. Residues 134 to 138, aspartate 167, glycine 180, and asparagine 325 each bind substrate; that span reads LASGG. Aspartate 353 is a binding site for Fe cation.

Belongs to the KAE1 / TsaD family. Fe(2+) serves as cofactor.

The protein resides in the cytoplasm. It carries out the reaction L-threonylcarbamoyladenylate + adenosine(37) in tRNA = N(6)-L-threonylcarbamoyladenosine(37) in tRNA + AMP + H(+). Its function is as follows. Required for the formation of a threonylcarbamoyl group on adenosine at position 37 (t(6)A37) in tRNAs that read codons beginning with adenine. Is involved in the transfer of the threonylcarbamoyl moiety of threonylcarbamoyl-AMP (TC-AMP) to the N6 group of A37, together with TsaE and TsaB. TsaD likely plays a direct catalytic role in this reaction. The chain is tRNA N6-adenosine threonylcarbamoyltransferase from Rickettsia prowazekii (strain Madrid E).